A 298-amino-acid chain; its full sequence is Sulfofructose kinase (298 aa).

6-deoxy-6-sulfo-D-fructose contacts are provided by Asp13, Lys27, Gly39, Ser95, and Arg138. ATP is bound by residues Thr212, Gly214, Gly217, and Gly243. 6-deoxy-6-sulfo-D-fructose is bound at residue Asp244.

It belongs to the carbohydrate kinase PfkB family. In terms of assembly, homodimer.

It catalyses the reaction 6-deoxy-6-sulfo-D-fructose + ATP = 6-deoxy-6-sulfo-D-fructose 1-phosphate + ADP + H(+). With respect to regulation, strongly inhibited by ADP. Activated by sulfoquinovose (SQ), sulfolactaldehyde (SLA) and dihydroxyacetone phosphate (DHAP) (through effects on KM) and by fructose 6-phosphate (F6P), fructose bisphosphate (FBP), phosphoenolpyruvate (PEP) and citrate (through effects on kcat/KM). Functionally, phosphorylates 6-deoxy-6-sulfo-D-fructose (SF) to 6-deoxy-6-sulfo-D-fructose 1-phosphate (SFP). Cannot phosphorylate fructose 6-phosphate. The protein is Sulfofructose kinase (yihV) of Escherichia coli (strain K12).